A 117-amino-acid chain; its full sequence is Eukaryotic translation initiation factor 4E-binding protein (117 aa).

Residues T37 and T46 each carry the phosphothreonine modification. Positions 54 to 60 (YERAFMK) match the YXXXXLphi motif; atypical motif. Position 65 is a phosphoserine (S65). T70 is subject to Phosphothreonine.

The protein belongs to the eIF4E-binding protein family. In terms of assembly, hypophosphorylated Thor/4E-BP competes with eIF4G1 to interact with eIF4E1; insulin stimulated Akt1 or Tor phosphorylation of Thor/4E-BP causes dissociation of the complex allowing eIF4G1 to bind and consequent initiation of translation. Post-translationally, phosphorylation at Thr-37, Thr-46, Ser-65 and Thr-70, corresponding to the hyperphosphorylated form, impairs its ability to prevent the interaction between eIF4G1 and eIF4E1, without affecting its interaction with free eIF4E1. Phosphorylated in rtesponse to insulin. Phosphorylation at Thr-46 is regulated by Tor and constitutes the major phosphorylation event that regulates activity. In terms of tissue distribution, widely expressed.

In terms of biological role, repressor of translation initiation that regulates eIF4E1 activity by preventing its assembly into the eIF4F complex. Hypophosphorylated form competes with eIF4G1 and strongly binds to eIF4E1, leading to repress translation. In contrast, hyperphosphorylated form dissociates from eIF4E1, allowing interaction between eIF4G1 and eIF4E1, leading to initiation of translation. Acts as a regulator of various biological processes, such as innate immunity, cell growth or synaptic transmission. Acts downstream of phosphoinositide-3-kinase (PI3K) to regulate cell growth. Extends lifespan upon dietary restriction by regulating the mitochondrial translation. Acts as a regulator of lifespan in response to cold by regulating the mitochondrial translation. Acts as a negative regulator of presynaptic release of neurotransmitter in motor neurons: Thor expression is induced in response to insulin signaling, leading to prevent of translation of complexin (cpx), a protein known to regulate the exocytosis of synaptic vesicles. Acts as a negative regulator of synaptic strength at the neuromuscular junction: Thor expression in response to acute fasting prevents translation, thereby suppressing retrograde synaptic enhancement. This is Eukaryotic translation initiation factor 4E-binding protein from Drosophila melanogaster (Fruit fly).